The primary structure comprises 562 residues: Solute carrier family 40 member 1 (562 aa).

Topologically, residues 1 to 20 (MDSPASKKPRCERFREFFKS) are cytoplasmic. The chain crosses the membrane as a helical span at residues 21–50 (AKFLIYVGHALSTWGDRMWNFAVAVFLVEL). Aspartate 36 contributes to the Fe cation binding site. Residues 51-54 (YGNS) lie on the Extracellular side of the membrane. The helical transmembrane segment at 55-81 (LLLTAVYGLVVAGSVLLLGAIIGDWVD) threads the bilayer. Residues 82–84 (KNP) are Cytoplasmic-facing. A helical transmembrane segment spans residues 85–115 (RLKVAQTSLVVQNSAVILCGALLMAVFQFKQ). The Extracellular portion of the chain corresponds to 116-123 (QLSSMYDG). The chain crosses the membrane as a helical span at residues 124-159 (WLLTTCYIMVISIANIANLASTAMSITIQRDWVVVV). Over 160-161 (AG) the chain is Cytoplasmic. A helical membrane pass occupies residues 162-192 (DDRSKLADMNATVRIIDQLTNILAPMLVGQI). Topologically, residues 193 to 199 (MAFGSHF) are extracellular. The helical transmembrane segment at 200–226 (IGCGFISGWNLFSMCLEYFLLWKVYQK) threads the bilayer. Residues 227 to 300 (TPALAFKAGQ…DGWVAYYNQS (74 aa)) are Cytoplasmic-facing. The chain crosses the membrane as a helical span at residues 301-327 (IFFAGMSLAFLYMTVLGFDCITTGYAY). Residue cysteine 320 participates in Fe cation binding. Over 328-332 (TQGLN) the chain is Extracellular. The helical transmembrane segment at 333 to 360 (GSVLSLLMGASAVSGICGTVAFTWIRKK) threads the bilayer. Topologically, residues 361–362 (CG) are cytoplasmic. The chain crosses the membrane as a helical span at residues 363 to 385 (LIRTGFIAGVTQLSCLTLCVASV). The Extracellular segment spans residues 386–444 (FAPGSPFDLSVSPFEEVLRHLFGDSGSLRESPTFIPTTEPPIQANVTVFEEAPPVESYM). A helical membrane pass occupies residues 445–474 (SVGLLFAGVIAARVGLWSFDLTVTQLIQEN). Residues 475–479 (VIESE) lie on the Cytoplasmic side of the membrane. A helical transmembrane segment spans residues 480–504 (RGVINGVQNSMNYLLDLLHFIMVIL). Fe cation is bound at residue histidine 498. Residues 505–507 (APN) lie on the Extracellular side of the membrane. The helical transmembrane segment at 508 to 533 (PEAFGLLVIISVSFVAMGHMMYFRFA) threads the bilayer. Over 534–562 (YKSLGSRLFLFCSPEQKPDPNIPSLPNSV) the chain is Cytoplasmic.

It belongs to the ferroportin (FP) (TC 2.A.100) family. SLC40A subfamily. As to expression, expressed in the yolk sac and placenta.

It localises to the cell membrane. It is found in the basolateral cell membrane. It carries out the reaction Fe(2+)(in) = Fe(2+)(out). Transports Fe(2+) from the inside of a cell to the outside of the cell, playing a key role for maintaining systemic iron homeostasis. May be involved in transfer of Fe(2+) between maternal and fetal circulation. The protein is Solute carrier family 40 member 1 (slc40a1) of Danio rerio (Zebrafish).